A 297-amino-acid chain; its full sequence is Phosphoribosylaminoimidazole-succinocarboxamide synthase (297 aa).

This sequence belongs to the SAICAR synthetase family.

It catalyses the reaction 5-amino-1-(5-phospho-D-ribosyl)imidazole-4-carboxylate + L-aspartate + ATP = (2S)-2-[5-amino-1-(5-phospho-beta-D-ribosyl)imidazole-4-carboxamido]succinate + ADP + phosphate + 2 H(+). Its pathway is purine metabolism; IMP biosynthesis via de novo pathway; 5-amino-1-(5-phospho-D-ribosyl)imidazole-4-carboxamide from 5-amino-1-(5-phospho-D-ribosyl)imidazole-4-carboxylate: step 1/2. The chain is Phosphoribosylaminoimidazole-succinocarboxamide synthase from Mycobacterium sp. (strain KMS).